The following is a 247-amino-acid chain: ATP synthase subunit a, chloroplastic (247 aa).

5 helical membrane-spanning segments follow: residues Gln-38 to Val-58, Val-95 to Leu-115, Ile-134 to Ser-154, Leu-199 to Leu-219, and Gly-220 to Gly-240.

The protein belongs to the ATPase A chain family. In terms of assembly, F-type ATPases have 2 components, CF(1) - the catalytic core - and CF(0) - the membrane proton channel. CF(1) has five subunits: alpha(3), beta(3), gamma(1), delta(1), epsilon(1). CF(0) has four main subunits: a, b, b' and c.

It is found in the plastid. It localises to the chloroplast thylakoid membrane. Functionally, key component of the proton channel; it plays a direct role in the translocation of protons across the membrane. In Cucumis sativus (Cucumber), this protein is ATP synthase subunit a, chloroplastic.